The following is a 229-amino-acid chain: Potassium/proton antiporter CemA (229 aa).

3 helical membrane passes run 7-27 (FTPL…SFSV), 107-127 (ILHF…SILG), and 189-209 (IISG…KYWI).

It belongs to the CemA family.

It is found in the plastid. The protein localises to the chloroplast inner membrane. The enzyme catalyses K(+)(in) + H(+)(out) = K(+)(out) + H(+)(in). Its function is as follows. Contributes to K(+)/H(+) antiport activity by supporting proton efflux to control proton extrusion and homeostasis in chloroplasts in a light-dependent manner to modulate photosynthesis. Prevents excessive induction of non-photochemical quenching (NPQ) under continuous-light conditions. Indirectly promotes efficient inorganic carbon uptake into chloroplasts. This Atropa belladonna (Belladonna) protein is Potassium/proton antiporter CemA.